We begin with the raw amino-acid sequence, 213 residues long: MRIFIDSANIEEIKEINGMGFLAGVTTNPSLVAKEKKDYKGLIREISMLVDGPISAEVIALDYQAMVQEGEELASIHPNVVIKIPLCEEGLKAIHALKQKGIATNATLVFSANQALLAARAGASYVSPFIGRVDDTGNDGLTLLDDIVQIFDQYMVETEVIAASIRHPMHVVASAKIGSNIATIPYQVIKQMVKHPLSDAGIEKFMSDWKKAF.

Residue lysine 83 is the Schiff-base intermediate with substrate of the active site.

This sequence belongs to the transaldolase family. Type 3B subfamily.

The protein resides in the cytoplasm. It catalyses the reaction D-sedoheptulose 7-phosphate + D-glyceraldehyde 3-phosphate = D-erythrose 4-phosphate + beta-D-fructose 6-phosphate. It functions in the pathway carbohydrate degradation; pentose phosphate pathway; D-glyceraldehyde 3-phosphate and beta-D-fructose 6-phosphate from D-ribose 5-phosphate and D-xylulose 5-phosphate (non-oxidative stage): step 2/3. Functionally, transaldolase is important for the balance of metabolites in the pentose-phosphate pathway. In Syntrophomonas wolfei subsp. wolfei (strain DSM 2245B / Goettingen), this protein is Probable transaldolase.